The primary structure comprises 90 residues: UPF0335 protein R02793 (90 aa).

This sequence belongs to the UPF0335 family.

The polypeptide is UPF0335 protein R02793 (Rhizobium meliloti (strain 1021) (Ensifer meliloti)).